The primary structure comprises 89 residues: Small ribosomal subunit protein uS17 (89 aa).

Belongs to the universal ribosomal protein uS17 family. Part of the 30S ribosomal subunit.

Its function is as follows. One of the primary rRNA binding proteins, it binds specifically to the 5'-end of 16S ribosomal RNA. The chain is Small ribosomal subunit protein uS17 from Polynucleobacter asymbioticus (strain DSM 18221 / CIP 109841 / QLW-P1DMWA-1) (Polynucleobacter necessarius subsp. asymbioticus).